The following is a 502-amino-acid chain: Lysine--tRNA ligase (502 aa).

Mg(2+)-binding residues include glutamate 413 and glutamate 420.

The protein belongs to the class-II aminoacyl-tRNA synthetase family. Homodimer. Mg(2+) serves as cofactor.

The protein localises to the cytoplasm. It carries out the reaction tRNA(Lys) + L-lysine + ATP = L-lysyl-tRNA(Lys) + AMP + diphosphate. The sequence is that of Lysine--tRNA ligase from Haemophilus influenzae (strain PittEE).